The chain runs to 306 residues: 4-hydroxy-3-methylbut-2-enyl diphosphate reductase (306 aa).

[4Fe-4S] cluster is bound at residue C12. (2E)-4-hydroxy-3-methylbut-2-enyl diphosphate-binding residues include H41 and H74. H41 and H74 together coordinate dimethylallyl diphosphate. Isopentenyl diphosphate is bound by residues H41 and H74. C96 contributes to the [4Fe-4S] cluster binding site. Position 124 (H124) interacts with (2E)-4-hydroxy-3-methylbut-2-enyl diphosphate. H124 contacts dimethylallyl diphosphate. H124 serves as a coordination point for isopentenyl diphosphate. E126 acts as the Proton donor in catalysis. A (2E)-4-hydroxy-3-methylbut-2-enyl diphosphate-binding site is contributed by T164. C194 provides a ligand contact to [4Fe-4S] cluster. (2E)-4-hydroxy-3-methylbut-2-enyl diphosphate is bound by residues S222, S223, N224, and S266. 4 residues coordinate dimethylallyl diphosphate: S222, S223, N224, and S266. Isopentenyl diphosphate is bound by residues S222, S223, N224, and S266.

The protein belongs to the IspH family. The cofactor is [4Fe-4S] cluster.

It carries out the reaction isopentenyl diphosphate + 2 oxidized [2Fe-2S]-[ferredoxin] + H2O = (2E)-4-hydroxy-3-methylbut-2-enyl diphosphate + 2 reduced [2Fe-2S]-[ferredoxin] + 2 H(+). It catalyses the reaction dimethylallyl diphosphate + 2 oxidized [2Fe-2S]-[ferredoxin] + H2O = (2E)-4-hydroxy-3-methylbut-2-enyl diphosphate + 2 reduced [2Fe-2S]-[ferredoxin] + 2 H(+). The protein operates within isoprenoid biosynthesis; dimethylallyl diphosphate biosynthesis; dimethylallyl diphosphate from (2E)-4-hydroxy-3-methylbutenyl diphosphate: step 1/1. Its pathway is isoprenoid biosynthesis; isopentenyl diphosphate biosynthesis via DXP pathway; isopentenyl diphosphate from 1-deoxy-D-xylulose 5-phosphate: step 6/6. In terms of biological role, catalyzes the conversion of 1-hydroxy-2-methyl-2-(E)-butenyl 4-diphosphate (HMBPP) into a mixture of isopentenyl diphosphate (IPP) and dimethylallyl diphosphate (DMAPP). Acts in the terminal step of the DOXP/MEP pathway for isoprenoid precursor biosynthesis. In Dechloromonas aromatica (strain RCB), this protein is 4-hydroxy-3-methylbut-2-enyl diphosphate reductase.